The following is a 186-amino-acid chain: Ribosome-recycling factor (186 aa).

The protein belongs to the RRF family.

It is found in the cytoplasm. Responsible for the release of ribosomes from messenger RNA at the termination of protein biosynthesis. May increase the efficiency of translation by recycling ribosomes from one round of translation to another. This chain is Ribosome-recycling factor, found in Rickettsia africae (strain ESF-5).